We begin with the raw amino-acid sequence, 527 residues long: T-complex protein 1 subunit delta (527 aa).

Belongs to the TCP-1 chaperonin family. In terms of assembly, heterooligomeric complex of about 850 to 900 kDa that forms two stacked rings, 12 to 16 nm in diameter.

The protein resides in the cytoplasm. Molecular chaperone; assists the folding of proteins upon ATP hydrolysis. Known to play a role, in vitro, in the folding of actin and tubulin. The protein is T-complex protein 1 subunit delta (cct4) of Schizosaccharomyces pombe (strain 972 / ATCC 24843) (Fission yeast).